Here is a 625-residue protein sequence, read N- to C-terminus: Threonine--tRNA ligase (625 aa).

The segment at 1-149 is editing domain; the sequence is MRVLLIHAKR…RNYEAKTTAR (149 aa). Catalytic stretches follow at residues 197–494 and 198–494; these read NPVN…PYIP and PVNK…PYIP. Zn(2+) is bound by residues C291, H342, and H463.

It belongs to the class-II aminoacyl-tRNA synthetase family. As to quaternary structure, homodimer. It depends on Zn(2+) as a cofactor.

The protein localises to the cytoplasm. It catalyses the reaction tRNA(Thr) + L-threonine + ATP = L-threonyl-tRNA(Thr) + AMP + diphosphate + H(+). Its function is as follows. Catalyzes the attachment of threonine to tRNA(Thr) in a two-step reaction: L-threonine is first activated by ATP to form Thr-AMP and then transferred to the acceptor end of tRNA(Thr). Also edits incorrectly charged L-seryl-tRNA(Thr). The protein is Threonine--tRNA ligase of Hyperthermus butylicus (strain DSM 5456 / JCM 9403 / PLM1-5).